Reading from the N-terminus, the 354-residue chain is UDP-N-acetylglucosamine--N-acetylmuramyl-(pentapeptide) pyrophosphoryl-undecaprenol N-acetylglucosamine transferase (354 aa).

Residues 11–13 (TAG), Arg164, Ser194, and Gln289 each bind UDP-N-acetyl-alpha-D-glucosamine.

The protein belongs to the glycosyltransferase 28 family. MurG subfamily.

It localises to the cell membrane. The enzyme catalyses di-trans,octa-cis-undecaprenyl diphospho-N-acetyl-alpha-D-muramoyl-L-alanyl-D-glutamyl-meso-2,6-diaminopimeloyl-D-alanyl-D-alanine + UDP-N-acetyl-alpha-D-glucosamine = di-trans,octa-cis-undecaprenyl diphospho-[N-acetyl-alpha-D-glucosaminyl-(1-&gt;4)]-N-acetyl-alpha-D-muramoyl-L-alanyl-D-glutamyl-meso-2,6-diaminopimeloyl-D-alanyl-D-alanine + UDP + H(+). The protein operates within cell wall biogenesis; peptidoglycan biosynthesis. Its function is as follows. Cell wall formation. Catalyzes the transfer of a GlcNAc subunit on undecaprenyl-pyrophosphoryl-MurNAc-pentapeptide (lipid intermediate I) to form undecaprenyl-pyrophosphoryl-MurNAc-(pentapeptide)GlcNAc (lipid intermediate II). This chain is UDP-N-acetylglucosamine--N-acetylmuramyl-(pentapeptide) pyrophosphoryl-undecaprenol N-acetylglucosamine transferase, found in Clostridium botulinum (strain ATCC 19397 / Type A).